The chain runs to 318 residues: tRNA U34 carboxymethyltransferase (318 aa).

Residues lysine 88, tryptophan 102, lysine 107, glycine 126, 176–177, methionine 192, tyrosine 196, and arginine 311 each bind carboxy-S-adenosyl-L-methionine; that span reads LE.

This sequence belongs to the class I-like SAM-binding methyltransferase superfamily. CmoB family. In terms of assembly, homotetramer.

The enzyme catalyses carboxy-S-adenosyl-L-methionine + 5-hydroxyuridine(34) in tRNA = 5-carboxymethoxyuridine(34) in tRNA + S-adenosyl-L-homocysteine + H(+). In terms of biological role, catalyzes carboxymethyl transfer from carboxy-S-adenosyl-L-methionine (Cx-SAM) to 5-hydroxyuridine (ho5U) to form 5-carboxymethoxyuridine (cmo5U) at position 34 in tRNAs. This is tRNA U34 carboxymethyltransferase from Pseudomonas putida (strain W619).